The sequence spans 211 residues: Redox-sensing transcriptional repressor Rex (211 aa).

A DNA-binding region (H-T-H motif) is located at residues 17-56; that stretch reads KYHRYLEELLRNEVDRISSKELSKKIGFTASQIRQDFNCF. 91-96 provides a ligand contact to NAD(+); that stretch reads GGGNIG.

The protein belongs to the transcriptional regulatory Rex family. In terms of assembly, homodimer.

It localises to the cytoplasm. Modulates transcription in response to changes in cellular NADH/NAD(+) redox state. This is Redox-sensing transcriptional repressor Rex from Clostridium tetani (strain Massachusetts / E88).